Here is a 63-residue protein sequence, read N- to C-terminus: Large ribosomal subunit protein uL29 (63 aa).

It belongs to the universal ribosomal protein uL29 family.

This is Large ribosomal subunit protein uL29 from Erwinia tasmaniensis (strain DSM 17950 / CFBP 7177 / CIP 109463 / NCPPB 4357 / Et1/99).